Consider the following 123-residue polypeptide: MIQPQTLLNVADNSGARKLMCIRVIGAAGNQRYARIGDVIIAVIKDAVPKMPLERSEVIRAVIVRTRKEFKGDDGIIIRYDDNAAVIIDQKGNPKGTRVFGAVAEELRELNFTKIVSLAPEVL.

The protein belongs to the universal ribosomal protein uL14 family. Part of the 50S ribosomal subunit.

The protein localises to the plastid. It is found in the chloroplast. Binds to 23S rRNA. The polypeptide is Large ribosomal subunit protein uL14c (Sorghum bicolor (Sorghum)).